Reading from the N-terminus, the 65-residue chain is Large ribosomal subunit protein bL35 (65 aa).

Belongs to the bacterial ribosomal protein bL35 family.

In Magnetococcus marinus (strain ATCC BAA-1437 / JCM 17883 / MC-1), this protein is Large ribosomal subunit protein bL35.